Here is a 142-residue protein sequence, read N- to C-terminus: MAAVVAVCGGLGRKKLTHLVTAAVSLTHPGTHTVLWRRGCSQQVSSNEDLPISMENPYKEPLKKCILCGKHVDYKNVQLLSQFVSPFTGCIYGRHITGLCGKKQKEITKAIKRAQIMGFMPVTYKDPAYLKDPKVCNIRYRE.

This sequence belongs to the bacterial ribosomal protein bS18 family. As to quaternary structure, component of the mitochondrial small ribosomal subunit (mt-SSU). Mature mammalian 55S mitochondrial ribosomes consist of a small (28S) and a large (39S) subunit. The 28S small subunit contains a 12S ribosomal RNA (12S mt-rRNA) and 30 different proteins. The 39S large subunit contains a 16S rRNA (16S mt-rRNA), a copy of mitochondrial valine transfer RNA (mt-tRNA(Val)), which plays an integral structural role, and 52 different proteins. bS18m has a zinc binding site.

The protein localises to the mitochondrion. The protein is Small ribosomal subunit protein bS18m (MRPS18C) of Homo sapiens (Human).